Reading from the N-terminus, the 152-residue chain is Large ribosomal subunit protein bL9 (152 aa).

This sequence belongs to the bacterial ribosomal protein bL9 family.

In terms of biological role, binds to the 23S rRNA. The protein is Large ribosomal subunit protein bL9 of Synechococcus elongatus (strain ATCC 33912 / PCC 7942 / FACHB-805) (Anacystis nidulans R2).